A 235-amino-acid chain; its full sequence is Phosphoribosylaminoimidazole-succinocarboxamide synthase (235 aa).

Belongs to the SAICAR synthetase family.

The enzyme catalyses 5-amino-1-(5-phospho-D-ribosyl)imidazole-4-carboxylate + L-aspartate + ATP = (2S)-2-[5-amino-1-(5-phospho-beta-D-ribosyl)imidazole-4-carboxamido]succinate + ADP + phosphate + 2 H(+). It participates in purine metabolism; IMP biosynthesis via de novo pathway; 5-amino-1-(5-phospho-D-ribosyl)imidazole-4-carboxamide from 5-amino-1-(5-phospho-D-ribosyl)imidazole-4-carboxylate: step 1/2. The chain is Phosphoribosylaminoimidazole-succinocarboxamide synthase from Nautilia profundicola (strain ATCC BAA-1463 / DSM 18972 / AmH).